Here is a 424-residue protein sequence, read N- to C-terminus: Serine--tRNA ligase (424 aa).

Residue 231-233 (TAE) coordinates L-serine. 262 to 264 (RAE) is a binding site for ATP. Residue Glu-285 coordinates L-serine. Position 349 to 352 (349 to 352 (EISS)) interacts with ATP. Residue Ser-385 coordinates L-serine.

It belongs to the class-II aminoacyl-tRNA synthetase family. Type-1 seryl-tRNA synthetase subfamily. In terms of assembly, homodimer. The tRNA molecule binds across the dimer.

The protein resides in the cytoplasm. It carries out the reaction tRNA(Ser) + L-serine + ATP = L-seryl-tRNA(Ser) + AMP + diphosphate + H(+). The enzyme catalyses tRNA(Sec) + L-serine + ATP = L-seryl-tRNA(Sec) + AMP + diphosphate + H(+). Its pathway is aminoacyl-tRNA biosynthesis; selenocysteinyl-tRNA(Sec) biosynthesis; L-seryl-tRNA(Sec) from L-serine and tRNA(Sec): step 1/1. Its function is as follows. Catalyzes the attachment of serine to tRNA(Ser). Is also able to aminoacylate tRNA(Sec) with serine, to form the misacylated tRNA L-seryl-tRNA(Sec), which will be further converted into selenocysteinyl-tRNA(Sec). The protein is Serine--tRNA ligase of Geobacillus thermodenitrificans (strain NG80-2).